Consider the following 252-residue polypeptide: 5-oxoprolinase subunit A 1 (252 aa).

It belongs to the LamB/PxpA family. As to quaternary structure, forms a complex composed of PxpA, PxpB and PxpC.

The catalysed reaction is 5-oxo-L-proline + ATP + 2 H2O = L-glutamate + ADP + phosphate + H(+). Its function is as follows. Catalyzes the cleavage of 5-oxoproline to form L-glutamate coupled to the hydrolysis of ATP to ADP and inorganic phosphate. The polypeptide is 5-oxoprolinase subunit A 1 (Bordetella bronchiseptica (strain ATCC BAA-588 / NCTC 13252 / RB50) (Alcaligenes bronchisepticus)).